A 2313-amino-acid polypeptide reads, in one-letter code: Cell surface glycoprotein 1 (2313 aa).

Residues Met-1–Ala-28 form the signal peptide. Cohesin domains lie at Ile-34–Ala-197 and Val-205–Val-367. The span at Gly-369–Glu-378 shows a compositional bias: acidic residues. Residues Gly-369–Ser-400 form a disordered region. The segment covering Pro-380–Ser-400 has biased composition (low complexity). The Cohesin 3 domain occupies Val-407–Val-569. Positions Gly-571 to Glu-580 are enriched in acidic residues. The segment at Gly-571 to Ser-602 is disordered. Over residues Pro-582 to Ser-602 the composition is skewed to low complexity. Positions Val-609 to Ala-771 constitute a Cohesin 4 domain. Residues Glu-772–Glu-782 are compositionally biased toward acidic residues. Residues Glu-772–Glu-805 are disordered. The segment covering Pro-784 to Pro-803 has biased composition (low complexity). The 163-residue stretch at Val-811–Ala-973 folds into the Cohesin 5 domain. The segment covering Glu-974–Glu-984 has biased composition (acidic residues). The tract at residues Glu-974–Glu-1007 is disordered. Over residues Pro-986–Glu-1007 the composition is skewed to low complexity. Residues Val-1013–Ala-1175 enclose the Cohesin 6 domain. 2 disordered regions span residues Gly-1177–Pro-1203 and Ala-1374–Ser-2111. A compositionally biased stretch (low complexity) spans Pro-1184–Pro-1203. One can recognise a Cohesin 7 domain in the interval Val-1211–Ser-1375. Residues Asp-1376–Pro-1390 are compositionally biased toward low complexity. The tract at residues Thr-1383–Pro-2025 is approximate tandem repeats of T-P-S-D-E-P. The span at Ser-1391 to Glu-1411 shows a compositional bias: pro residues. Over residues Pro-1423 to Pro-1433 the composition is skewed to low complexity. The segment covering Ser-1434–Glu-1454 has biased composition (pro residues). The segment covering Pro-1466–Pro-1476 has biased composition (low complexity). A compositionally biased stretch (pro residues) spans Ser-1477–Glu-1497. Residues Pro-1509–Pro-1519 are compositionally biased toward low complexity. Positions Ser-1520 to Glu-1540 are enriched in pro residues. Low complexity predominate over residues Pro-1552–Pro-1562. Residues Ser-1563–Glu-1595 are compositionally biased toward pro residues. The segment covering Pro-1607–Pro-1617 has biased composition (low complexity). The segment covering Ser-1618 to Glu-1650 has biased composition (pro residues). Residues Pro-1662–Pro-1672 show a composition bias toward low complexity. The segment covering Ser-1673–Glu-1693 has biased composition (pro residues). The segment covering Pro-1705 to Pro-1715 has biased composition (low complexity). Residues Ser-1716–Glu-1736 are compositionally biased toward pro residues. Residues Pro-1748 to Pro-1758 are compositionally biased toward low complexity. A compositionally biased stretch (pro residues) spans Ser-1759–Glu-1779. Residues Pro-1791–Pro-1801 are compositionally biased toward low complexity. Positions Ser-1802–Glu-1822 are enriched in pro residues. A compositionally biased stretch (low complexity) spans Pro-1834–Pro-1844. Positions Ser-1845–Glu-1865 are enriched in pro residues. Over residues Pro-1877–Pro-1887 the composition is skewed to low complexity. The segment covering Ser-1888–Glu-1908 has biased composition (pro residues). Low complexity predominate over residues Pro-1920–Pro-1930. Residues Ser-1931–Glu-1963 show a composition bias toward pro residues. Over residues Pro-1975–Pro-1985 the composition is skewed to low complexity. Pro residues-rich tracts occupy residues Ser-1986–Glu-2018 and Glu-2027–Ser-2039. Residues Gly-2045 to Thr-2062 are compositionally biased toward gly residues. SLH domains lie at Pro-2067–Gln-2140, Ser-2141–Ser-2204, and Ile-2211–Lys-2274. The span at Ser-2073–Thr-2082 shows a compositional bias: low complexity.

As to quaternary structure, assembled into mono-layered crystalline arrays.

The protein resides in the secreted. It is found in the cell wall. Its subcellular location is the S-layer. The chain is Cell surface glycoprotein 1 (olpB) from Acetivibrio thermocellus (strain ATCC 27405 / DSM 1237 / JCM 9322 / NBRC 103400 / NCIMB 10682 / NRRL B-4536 / VPI 7372) (Clostridium thermocellum).